The primary structure comprises 434 residues: Serine--tRNA ligase (434 aa).

230-232 (TSE) contacts L-serine. ATP is bound by residues 261-263 (RRE) and Val-277. Residue Glu-284 coordinates L-serine. ATP is bound at residue 348-351 (ELTS). Thr-393 contacts L-serine.

It belongs to the class-II aminoacyl-tRNA synthetase family. Type-1 seryl-tRNA synthetase subfamily. In terms of assembly, homodimer. The tRNA molecule binds across the dimer.

Its subcellular location is the cytoplasm. It catalyses the reaction tRNA(Ser) + L-serine + ATP = L-seryl-tRNA(Ser) + AMP + diphosphate + H(+). The catalysed reaction is tRNA(Sec) + L-serine + ATP = L-seryl-tRNA(Sec) + AMP + diphosphate + H(+). It functions in the pathway aminoacyl-tRNA biosynthesis; selenocysteinyl-tRNA(Sec) biosynthesis; L-seryl-tRNA(Sec) from L-serine and tRNA(Sec): step 1/1. Catalyzes the attachment of serine to tRNA(Ser). Is also able to aminoacylate tRNA(Sec) with serine, to form the misacylated tRNA L-seryl-tRNA(Sec), which will be further converted into selenocysteinyl-tRNA(Sec). The protein is Serine--tRNA ligase of Kocuria rhizophila (strain ATCC 9341 / DSM 348 / NBRC 103217 / DC2201).